The following is a 274-amino-acid chain: tRNA-cytidine(32) 2-sulfurtransferase (274 aa).

The PP-loop motif motif lies at serine 40–serine 45. [4Fe-4S] cluster is bound by residues cysteine 115, cysteine 118, and cysteine 206.

It belongs to the TtcA family. Homodimer. Mg(2+) serves as cofactor. [4Fe-4S] cluster is required as a cofactor.

Its subcellular location is the cytoplasm. The enzyme catalyses cytidine(32) in tRNA + S-sulfanyl-L-cysteinyl-[cysteine desulfurase] + AH2 + ATP = 2-thiocytidine(32) in tRNA + L-cysteinyl-[cysteine desulfurase] + A + AMP + diphosphate + H(+). The protein operates within tRNA modification. Functionally, catalyzes the ATP-dependent 2-thiolation of cytidine in position 32 of tRNA, to form 2-thiocytidine (s(2)C32). The sulfur atoms are provided by the cysteine/cysteine desulfurase (IscS) system. This chain is tRNA-cytidine(32) 2-sulfurtransferase, found in Pseudomonas fluorescens (strain SBW25).